Consider the following 94-residue polypeptide: MKFIRETKDGAVILLYVQPKAKKNEIEGVDEWRGRLKVKIKAPPVEGKANKEVVRFFSKMLGTEVEIIRGGTSREKDLLVKGFSSKEVLKKLGL.

Belongs to the UPF0235 family.

The sequence is that of UPF0235 protein TON_0641 from Thermococcus onnurineus (strain NA1).